Consider the following 59-residue polypeptide: MGIFLLFLVLLAVPQAAPESDTVTCRKMKGKCSFLLCPFFKRSSGTCYNGLAKCCRPFW.

The N-terminal stretch at 1–18 (MGIFLLFLVLLAVPQAAP) is a signal peptide. 3 disulfide bridges follow: C25/C54, C32/C47, and C37/C55.

This sequence belongs to the beta-defensin family.

It is found in the secreted. The protein localises to the cytoplasmic granule. In terms of biological role, has bactericidal activity. This Gallus gallus (Chicken) protein is Gallinacin-14 (GAL14).